A 210-amino-acid polypeptide reads, in one-letter code: Uridine kinase (210 aa).

Residue 12–19 (GGSGSGKT) participates in ATP binding.

This sequence belongs to the uridine kinase family.

The protein localises to the cytoplasm. It carries out the reaction uridine + ATP = UMP + ADP + H(+). The enzyme catalyses cytidine + ATP = CMP + ADP + H(+). The protein operates within pyrimidine metabolism; CTP biosynthesis via salvage pathway; CTP from cytidine: step 1/3. It participates in pyrimidine metabolism; UMP biosynthesis via salvage pathway; UMP from uridine: step 1/1. This chain is Uridine kinase, found in Leuconostoc citreum (strain KM20).